Reading from the N-terminus, the 67-residue chain is MLKIKPAAGKAIRDPLTMKLLASEGEEKPRNSFWIRRLAAGDVVEVGSTENTADDTDAAPKKRSKSK.

The segment at 45-67 is disordered; it reads EVGSTENTADDTDAAPKKRSKSK.

Its subcellular location is the virion. The protein localises to the host cytoplasm. Its function is as follows. May possibly stop tail sheath polymerization by capping the polymerizing tail sheath once it has reached its requisite length and prevent its depolymerization. Probably interacts with both the tube and sheath proteins. This Escherichia phage Mu (Bacteriophage Mu) protein is Putative sheath terminator protein.